The primary structure comprises 263 residues: Sepiapterin reductase (263 aa).

NADP(+)-binding positions include 18–24, 46–47, and 73–74; these read GASRGFG, RT, and DL. Residues 160–161 and Y173 contribute to the substrate site; that span reads SL. K177 lines the NADP(+) pocket. G202 provides a ligand contact to substrate. 204–209 is an NADP(+) binding site; that stretch reads LDTDMH. D260 is a binding site for substrate.

It belongs to the sepiapterin reductase family. Homodimer.

The protein resides in the cytoplasm. It catalyses the reaction L-erythro-7,8-dihydrobiopterin + NADP(+) = L-sepiapterin + NADPH + H(+). The enzyme catalyses (6R)-L-erythro-5,6,7,8-tetrahydrobiopterin + 2 NADP(+) = 6-pyruvoyl-5,6,7,8-tetrahydropterin + 2 NADPH + 2 H(+). Its function is as follows. Catalyzes the final one or two reductions in tetra-hydrobiopterin biosynthesis to form 5,6,7,8-tetrahydrobiopterin. In Xenopus laevis (African clawed frog), this protein is Sepiapterin reductase (spr).